Here is a 924-residue protein sequence, read N- to C-terminus: DNA repair and recombination protein RDH54 (924 aa).

Basic and acidic residues predominate over residues M1–P10. 2 disordered regions span residues M1–K21 and E155–G183. Residues T168–T178 show a composition bias toward low complexity. Positions L299–G487 constitute a Helicase ATP-binding domain. I346–K353 contacts ATP. The short motif at N472 to N475 is the DEGH box element. K615 is covalently cross-linked (Glycyl lysine isopeptide (Lys-Gly) (interchain with G-Cter in ubiquitin)). One can recognise a Helicase C-terminal domain in the interval K631–S790.

The protein belongs to the SNF2/RAD54 helicase family. In terms of assembly, interacts with RAD51 and DMC1.

It is found in the nucleus. The catalysed reaction is ATP + H2O = ADP + phosphate + H(+). Involved in the recombinational repair of double-strand breaks (DSB) in DNA during mitosis and meiosis. Has DNA dependent ATPase activity. Promotes D-loop (displacement loop) formation with RAD51 recombinase. Modifies the topology of double-stranded DNA during the D-loop reaction to facilitate the invasion of the homologous duplex molecule by the initiating single-stranded DNA substrate. Required for adaptation from G2/M checkpoint arrest induced by a double strand break, by participating in monitoring the extent of single-stranded DNA produced by resection of DNA ends. This role is distinct from its roles in recombination. Promotes colocalization of RAD51 and DMC1 during meiotic recombination. Involved in crossover interference. In Saccharomyces cerevisiae (strain YJM789) (Baker's yeast), this protein is DNA repair and recombination protein RDH54 (RDH54).